The primary structure comprises 180 residues: Endothelin-2 (180 aa).

Positions 1-26 are cleaved as a signal peptide; that stretch reads MVALPTAWCSVALALLVALHEGKSQS. The propeptide occupies 27–47; sequence AATSEEPPAPSARARGSHLRL. Cystine bridges form between Cys50–Cys64 and Cys52–Cys60. Residues 71-180 constitute a propeptide that is removed on maturation; that stretch reads VNTPGQTAPY…ESSHSRWRKR (110 aa). The tract at residues 97-112 is endothelin-like; it reads CECYSTRDSACVTFCH. The disordered stretch occupies residues 157-180; sequence NFTRHQQQKATREPESSHSRWRKR.

It belongs to the endothelin/sarafotoxin family.

It localises to the secreted. Functionally, endothelins are endothelium-derived vasoconstrictor peptides. The sequence is that of Endothelin-2 (EDN2) from Atelerix albiventris (Middle-African hedgehog).